Consider the following 576-residue polypeptide: ATP-dependent RNA helicase has1 (576 aa).

The segment at 1–94 is disordered; sequence MGSAQDQTKK…STMGLSLPTD (94 aa). Positions 26–37 are enriched in basic and acidic residues; that stretch reads RVVEADDQRELT. The span at 51 to 66 shows a compositional bias: acidic residues; it reads PPTDETPDAEDVEQTE. The short motif at 98-126 is the Q motif element; the sequence is QKFDELNLSEPTMKAIRQMGFETMTEIQQ. Residues 129–305 form the Helicase ATP-binding domain; the sequence is IPPTLAGRDI…RISLKPGPLY (177 aa). 142 to 149 provides a ligand contact to ATP; that stretch reads AKTGSGKT. Residues 252 to 255 carry the DEAD box motif; the sequence is DEAD. The 172-residue stretch at 319 to 490 folds into the Helicase C-terminal domain; sequence GVDQGYIICE…DIQSQLEKLI (172 aa). The segment at 555 to 576 is disordered; that stretch reads DKVQARRPYGSQNKSARFKRRA.

It belongs to the DEAD box helicase family. DDX18/HAS1 subfamily. As to quaternary structure, associates in the nucleolus with the 60S and pre-60S ribosomal subunits.

It localises to the nucleus. It is found in the nucleolus. The enzyme catalyses ATP + H2O = ADP + phosphate + H(+). ATP-dependent RNA helicase involved in 40S ribosomal subunit biogenesis. Required for the processing and cleavage of 35S pre-rRNA at sites A0, A1, and A2, leading to mature 18S rRNA. This is ATP-dependent RNA helicase has1 (has1) from Aspergillus terreus (strain NIH 2624 / FGSC A1156).